The following is a 433-amino-acid chain: uncharacterized protein (433 aa).

A TRAM domain is found at 1–59 (MGEEYEVEIGPVAHGGHCIARTSEGQVLFVRHALPGERVLARVTEGEEGARYLRADAVE). [4Fe-4S] cluster-binding residues include Cys72, Cys80, Cys83, and Cys168. S-adenosyl-L-methionine-binding residues include Gln262, Tyr291, Glu315, and Asp359. Cys386 (nucleophile) is an active-site residue.

The protein belongs to the class I-like SAM-binding methyltransferase superfamily. RNA M5U methyltransferase family.

This is an uncharacterized protein from Streptomyces avermitilis (strain ATCC 31267 / DSM 46492 / JCM 5070 / NBRC 14893 / NCIMB 12804 / NRRL 8165 / MA-4680).